The sequence spans 333 residues: T-cell surface glycoprotein CD1b-2 (333 aa).

The signal sequence occupies residues 1–20; it reads MLLLPLLLLGVILPGGDNED. Over 21-302 the chain is Extracellular; that stretch reads VFQGPTSFHL…LYWGHPTSIG (282 aa). N38, N75, and N146 each carry an N-linked (GlcNAc...) asparagine glycan. Intrachain disulfides connect C120–C184, C149–C163, and C224–C279. The Ig-like domain occupies 185–295; that stretch reads PRYLLGVLDA…LGDQDIILYW (111 aa). The helical transmembrane segment at 303–323 threads the bilayer; sequence LILVAIIVPSLILSICLALWF. Residues 324–333 lie on the Cytoplasmic side of the membrane; the sequence is WRRWSYQNIL. The Internalization signal motif lies at 329 to 332; sequence YQNI.

In terms of assembly, heterodimer with B2M (beta-2-microglobulin). Interacts with saposin C.

It localises to the cell membrane. Its subcellular location is the endosome membrane. The protein localises to the lysosome membrane. Its function is as follows. Antigen-presenting protein that binds self and non-self lipid and glycolipid antigens and presents them to T-cell receptors on natural killer T-cells. This is T-cell surface glycoprotein CD1b-2 from Ovis aries (Sheep).